A 420-amino-acid polypeptide reads, in one-letter code: Beta-arrestin-2 (420 aa).

A Phosphotyrosine modification is found at Tyr-48. 2 positions are modified to hydroxyproline; by PHD2: Pro-176 and Pro-181. Positions 240–409 (ADICLFSTAQ…EDFARLRLKG (170 aa)) are interaction with TRAF6. Ser-360 carries the phosphoserine modification. Positions 374 to 420 (PETDAPVDTNLIEFETNYATDDDIVFEDFARLRLKGLKDEDYDDQFC) are interaction with AP2B1. The residue at position 393 (Thr-393) is a Phosphothreonine. A [DE]-X(1,2)-F-X-X-[FL]-X-X-X-R motif motif is present at residues 396–406 (DIVFEDFARLR).

Belongs to the arrestin family. As to quaternary structure, homooligomer; the self-association is mediated by InsP6-binding. Heterooligomer with ARRB1; the association is mediated by InsP6-binding. Interacts with ADRB2 and CHRM2. Interacts with PDE4A. Interacts with PDE4D. Interacts with MAPK10, MAPK1 and MAPK3. Interacts with DRD2. Interacts with FSHR. Interacts with CLTC. Interacts with HTR2C. Interacts with CRR5. Interacts with CXCR4. Interacts with SRC. Interacts with DUSP16; the interaction is interrupted by stimulation of AGTR1 and activation of MAPK10. Interacts with CHUK; the interaction is enhanced stimulation of ADRB2. Interacts with RELA. Interacts with MDM2; the interaction is enhanced by activation of GPCRs. Interacts with SLC9A5. Interacts with TRAF6. Interacts with IGF1R. Interacts with ENG. Interacts with KIR2DL1, KIR2DL3 and KIR2DL4. Interacts with LDLR. Interacts with AP2B1. Interacts with C5AR1. Interacts with RAF1. Interacts with MAP2K1. Interacts with MAPK1. Interacts with MAPK10; the interaction enhances MAPK10 activation by MAP3K5. Interacts with MAP2K4; the interaction is enhanced by presence of MAP3K5 and MAPK10. Interacts with MAP3K5. Interacts with AKT1. Interacts with IKBKB and MAP3K14. Interacts with SMO (activated). Interacts with GSK3A and GSK3B. Associates with protein phosphatase 2A (PP2A). Interacts with CXCR4; the interaction is dependent on C-terminal phosphorylation of CXCR4 and allows activation of MAPK1 and MAPK3. Interacts with GPR143. Interacts with HCK and CXCR1 (phosphorylated). Interacts with ACKR3 and ACKR4. Interacts with ARRDC1; the interaction is direct. Interacts with GPR61, GPR62 and GPR135. Interacts (via NACHT and LRR domains) with NLRP3; this interaction is direct and inducible by omega-3 polyunsaturated fatty acids (PUFAs). Interacts with FFAR4 (via C-terminus); this interaction is stimulated by long-chain fatty acids (LCFAs). Interacts with GPR35. Interacts with GPR84. Interacts with TIGIT; this interaction inhibits the NF-kappa-B pathway. Interacts with TGFBR3. In terms of processing, phosphorylated at Thr-382 in the cytoplasm; probably dephosphorylated at the plasma membrane. The phosphorylation does not regulate internalization and recycling of ADRB2, interaction with clathrin or AP2B1. The ubiquitination status appears to regulate the formation and trafficking of beta-arrestin-GPCR complexes and signaling. Ubiquitination appears to occur GPCR-specific. Ubiquitinated by MDM2; the ubiquitination is required for rapid internalization of ADRB2. Deubiquitinated by USP33; the deubiquitination leads to a dissociation of the beta-arrestin-GPCR complex. Stimulation of a class A GPCR, such as ADRB2, induces transient ubiquitination and subsequently promotes association with USP33. Stimulation of a class B GPCR promotes a sustained ubiquitination. Deubiquitinated by USP20; allowing USP20 to deubiquitinate TRAF6 leading to inhibition of NF-kappa-B signaling. Post-translationally, hydroxylation by PHD2 modulates the rate of internalization by slowing down recruitment to the plasma membrane and inhibiting subsequent co-internalization with class A receptors. As to expression, found in a variety of tissues. The short isoform is the most abundant form in all tissues.

It is found in the cytoplasm. Its subcellular location is the nucleus. The protein resides in the cell membrane. The protein localises to the membrane. It localises to the clathrin-coated pit. It is found in the cytoplasmic vesicle. Functionally, functions in regulating agonist-mediated G-protein coupled receptor (GPCR) signaling by mediating both receptor desensitization and resensitization processes. During homologous desensitization, beta-arrestins bind to the GPRK-phosphorylated receptor and sterically preclude its coupling to the cognate G-protein; the binding appears to require additional receptor determinants exposed only in the active receptor conformation. The beta-arrestins target many receptors for internalization by acting as endocytic adapters (CLASPs, clathrin-associated sorting proteins) and recruiting the GPRCs to the adapter protein 2 complex 2 (AP-2) in clathrin-coated pits (CCPs). However, the extent of beta-arrestin involvement appears to vary significantly depending on the receptor, agonist and cell type. Internalized arrestin-receptor complexes traffic to intracellular endosomes, where they remain uncoupled from G-proteins. Two different modes of arrestin-mediated internalization occur. Class A receptors, like ADRB2, OPRM1, ENDRA, D1AR and ADRA1B dissociate from beta-arrestin at or near the plasma membrane and undergo rapid recycling. Class B receptors, like AVPR2, AGTR1, NTSR1, TRHR and TACR1 internalize as a complex with arrestin and traffic with it to endosomal vesicles, presumably as desensitized receptors, for extended periods of time. Receptor resensitization then requires that receptor-bound arrestin is removed so that the receptor can be dephosphorylated and returned to the plasma membrane. Mediates endocytosis of CCR7 following ligation of CCL19 but not CCL21. Involved in internalization of P2RY1, P2RY4, P2RY6 and P2RY11 and ATP-stimulated internalization of P2RY2. Involved in phosphorylation-dependent internalization of OPRD1 and subsequent recycling or degradation. Involved in ubiquitination of IGF1R. Beta-arrestins function as multivalent adapter proteins that can switch the GPCR from a G-protein signaling mode that transmits short-lived signals from the plasma membrane via small molecule second messengers and ion channels to a beta-arrestin signaling mode that transmits a distinct set of signals that are initiated as the receptor internalizes and transits the intracellular compartment. Acts as a signaling scaffold for MAPK pathways such as MAPK1/3 (ERK1/2) and MAPK10 (JNK3). ERK1/2 and JNK3 activated by the beta-arrestin scaffold are largely excluded from the nucleus and confined to cytoplasmic locations such as endocytic vesicles, also called beta-arrestin signalosomes. Acts as a signaling scaffold for the AKT1 pathway. GPCRs for which the beta-arrestin-mediated signaling relies on both ARRB1 and ARRB2 (codependent regulation) include ADRB2, F2RL1 and PTH1R. For some GPCRs the beta-arrestin-mediated signaling relies on either ARRB1 or ARRB2 and is inhibited by the other respective beta-arrestin form (reciprocal regulation). Increases ERK1/2 signaling in AGTR1- and AVPR2-mediated activation (reciprocal regulation). Involved in CCR7-mediated ERK1/2 signaling involving ligand CCL19. Is involved in type-1A angiotensin II receptor/AGTR1-mediated ERK activity. Is involved in type-1A angiotensin II receptor/AGTR1-mediated MAPK10 activity. Is involved in dopamine-stimulated AKT1 activity in the striatum by disrupting the association of AKT1 with its negative regulator PP2A. Involved in AGTR1-mediated chemotaxis. Appears to function as signaling scaffold involved in regulation of MIP-1-beta-stimulated CCR5-dependent chemotaxis. Involved in attenuation of NF-kappa-B-dependent transcription in response to GPCR or cytokine stimulation by interacting with and stabilizing CHUK. Suppresses UV-induced NF-kappa-B-dependent activation by interacting with CHUK. The function is promoted by stimulation of ADRB2 and dephosphorylation of ARRB2. Involved in p53/TP53-mediated apoptosis by regulating MDM2 and reducing the MDM2-mediated degradation of p53/TP53. May serve as nuclear messenger for GPCRs. Upon stimulation of OR1D2, may be involved in regulation of gene expression during the early processes of fertilization. Also involved in regulation of receptors other than GPCRs. Involved in endocytosis of TGFBR2 and TGFBR3 and down-regulates TGF-beta signaling such as NF-kappa-B activation. Involved in endocytosis of low-density lipoprotein receptor/LDLR. Involved in endocytosis of smoothened homolog/Smo, which also requires GRK2. Involved in endocytosis of SLC9A5. Involved in endocytosis of ENG and subsequent TGF-beta-mediated ERK activation and migration of epithelial cells. Involved in Toll-like receptor and IL-1 receptor signaling through the interaction with TRAF6 which prevents TRAF6 autoubiquitination and oligomerization required for activation of NF-kappa-B and JUN. Involved in insulin resistance by acting as insulin-induced signaling scaffold for SRC, AKT1 and INSR. Involved in regulation of inhibitory signaling of natural killer cells by recruiting PTPN6 and PTPN11 to KIR2DL1. Involved in IL8-mediated granule release in neutrophils. Involved in the internalization of the atypical chemokine receptor ACKR3. Acts as an adapter protein coupling FFAR4 receptor to specific downstream signaling pathways, as well as mediating receptor endocytosis. During the activation step of NLRP3 inflammasome, directly associates with NLRP3 leading to inhibition of pro-inflammatory cytokine release and inhibition of inflammation. The chain is Beta-arrestin-2 (ARRB2) from Bos taurus (Bovine).